A 274-amino-acid polypeptide reads, in one-letter code: Protein LIKE COV 3 (274 aa).

Over 1 to 60 (METRERDLERLIPMHKSGASPRDVVLSVPPSPLASPIHVAGKEAIYKVIRSWASKKFMTG) the chain is Cytoplasmic. A helical transmembrane segment spans residues 61–81 (CVILLPIAVTFYFTWWFIHFV). The Extracellular portion of the chain corresponds to 82 to 93 (DGFFSPIYTHLG). Residues 94 to 114 (INMFGLGFVTSITFIFMVGVF) form a helical membrane-spanning segment. At 115–274 (MSSWLGASVL…VCLSLVLAWT (160 aa)) the chain is on the cytoplasmic side.

The protein belongs to the plant COV1 protein family.

It localises to the membrane. In Arabidopsis thaliana (Mouse-ear cress), this protein is Protein LIKE COV 3.